The following is a 320-amino-acid chain: Ferrochelatase (320 aa).

The Fe cation site is built by His-194 and Glu-275.

This sequence belongs to the ferrochelatase family. Monomer.

The protein localises to the cytoplasm. The enzyme catalyses heme b + 2 H(+) = protoporphyrin IX + Fe(2+). Its pathway is porphyrin-containing compound metabolism; protoheme biosynthesis; protoheme from protoporphyrin-IX: step 1/1. Catalyzes the ferrous insertion into protoporphyrin IX. The chain is Ferrochelatase from Shigella boydii serotype 18 (strain CDC 3083-94 / BS512).